Here is a 488-residue protein sequence, read N- to C-terminus: Altronate oxidoreductase (488 aa).

18–29 (VIQFGEGNFLRA) is an NAD(+) binding site.

Belongs to the mannitol dehydrogenase family. UxaB subfamily.

The enzyme catalyses D-altronate + NAD(+) = keto-D-tagaturonate + NADH + H(+). It participates in carbohydrate metabolism; pentose and glucuronate interconversion. This chain is Altronate oxidoreductase, found in Pectobacterium carotovorum subsp. carotovorum (strain PC1).